Reading from the N-terminus, the 602-residue chain is Isocitrate dehydrogenase kinase/phosphatase (602 aa).

ATP is bound by residues 327 to 333 (APGIKGM) and Lys348. Residue Asp383 is part of the active site.

This sequence belongs to the AceK family.

The protein localises to the cytoplasm. It catalyses the reaction L-seryl-[isocitrate dehydrogenase] + ATP = O-phospho-L-seryl-[isocitrate dehydrogenase] + ADP + H(+). Bifunctional enzyme which can phosphorylate or dephosphorylate isocitrate dehydrogenase (IDH) on a specific serine residue. This is a regulatory mechanism which enables bacteria to bypass the Krebs cycle via the glyoxylate shunt in response to the source of carbon. When bacteria are grown on glucose, IDH is fully active and unphosphorylated, but when grown on acetate or ethanol, the activity of IDH declines drastically concomitant with its phosphorylation. The protein is Isocitrate dehydrogenase kinase/phosphatase of Paraburkholderia phymatum (strain DSM 17167 / CIP 108236 / LMG 21445 / STM815) (Burkholderia phymatum).